The following is a 382-amino-acid chain: 1-deoxy-D-xylulose 5-phosphate reductoisomerase (382 aa).

Positions 10, 11, 12, 13, 36, 37, 38, and 121 each coordinate NADPH. Lys122 provides a ligand contact to 1-deoxy-D-xylulose 5-phosphate. Glu123 serves as a coordination point for NADPH. Asp147 contributes to the Mn(2+) binding site. Residues Ser148, Glu149, Ser173, and His196 each contribute to the 1-deoxy-D-xylulose 5-phosphate site. Position 149 (Glu149) interacts with Mn(2+). Gly202 contacts NADPH. Residues Ser209, Asn214, Lys215, and Glu218 each coordinate 1-deoxy-D-xylulose 5-phosphate. A Mn(2+)-binding site is contributed by Glu218.

It belongs to the DXR family. The cofactor is Mg(2+). Requires Mn(2+) as cofactor.

The enzyme catalyses 2-C-methyl-D-erythritol 4-phosphate + NADP(+) = 1-deoxy-D-xylulose 5-phosphate + NADPH + H(+). Its pathway is isoprenoid biosynthesis; isopentenyl diphosphate biosynthesis via DXP pathway; isopentenyl diphosphate from 1-deoxy-D-xylulose 5-phosphate: step 1/6. Its function is as follows. Catalyzes the NADPH-dependent rearrangement and reduction of 1-deoxy-D-xylulose-5-phosphate (DXP) to 2-C-methyl-D-erythritol 4-phosphate (MEP). The polypeptide is 1-deoxy-D-xylulose 5-phosphate reductoisomerase (Geobacillus kaustophilus (strain HTA426)).